Here is a 299-residue protein sequence, read N- to C-terminus: rRNA methyltransferase (299 aa).

Positions 14–53 (AEKRSGRGRMAAARTTGAQSRKTAQRSGRSEADRRRRVHG) are disordered. Residues 21–31 (GRMAAARTTGA) show a composition bias toward low complexity. The S-adenosyl-L-methionine site is built by asparagine 55, leucine 57, glycine 82, glutamate 103, aspartate 128, and asparagine 144.

Belongs to the class I-like SAM-binding methyltransferase superfamily. rRNA adenine N(6)-methyltransferase family.

In terms of biological role, probable RNA methylase. Confers resistance to carbomycin and several other macrolides, lincomycin and vernamycin B, but not to all macrolide-lincosamide-streptogramin B antibiotics. This is rRNA methyltransferase (carB) from Streptomyces thermotolerans.